The primary structure comprises 89 residues: NADH-ubiquinone oxidoreductase chain 4L (89 aa).

A run of 3 helical transmembrane segments spans residues methionine 1–asparagine 21, isoleucine 22–isoleucine 42, and phenylalanine 55–valine 75.

The protein belongs to the complex I subunit 4L family.

The protein resides in the mitochondrion membrane. It catalyses the reaction a ubiquinone + NADH + 5 H(+)(in) = a ubiquinol + NAD(+) + 4 H(+)(out). Functionally, core subunit of the mitochondrial membrane respiratory chain NADH dehydrogenase (Complex I) that is believed to belong to the minimal assembly required for catalysis. Complex I functions in the transfer of electrons from NADH to the respiratory chain. The immediate electron acceptor for the enzyme is believed to be ubiquinone. This Trichophyton rubrum (Athlete's foot fungus) protein is NADH-ubiquinone oxidoreductase chain 4L (ND4L).